A 111-amino-acid polypeptide reads, in one-letter code: Cell cycle protein GpsB (111 aa).

Residues 38 to 72 adopt a coiled-coil conformation; it reads IKDYEAFHKEFEQLKQQNARLKRELEEQKLAVTQV.

It belongs to the GpsB family. Forms polymers through the coiled coil domains. Interacts with PBP1, MreC and EzrA.

The protein resides in the cytoplasm. Divisome component that associates with the complex late in its assembly, after the Z-ring is formed, and is dependent on DivIC and PBP2B for its recruitment to the divisome. Together with EzrA, is a key component of the system that regulates PBP1 localization during cell cycle progression. Its main role could be the removal of PBP1 from the cell pole after pole maturation is completed. Also contributes to the recruitment of PBP1 to the division complex. Not essential for septum formation. The protein is Cell cycle protein GpsB of Bacillus cereus (strain G9842).